The following is a 648-amino-acid chain: Adhesion G-protein coupled receptor G1 (648 aa).

Residues 1 to 24 form the signal peptide; sequence MKQNPAKTARMWIIICLLFVLGQA. The Extracellular segment spans residues 25–370; the sequence is TDNDRDFKMC…STVRHLKALT (346 aa). Cys34 and Cys96 form a disulfide bridge. Residues Asn62, Asn91, Asn114, Asn146, Asn222, Asn262, and Asn286 are each glycosylated (N-linked (GlcNAc...) asparagine). A disulfide bond links Cys127 and Cys176. The region spanning 214–361 is the GAIN-B domain; sequence MDEEFTGHNF…AILVQVEQKS (148 aa). Disulfide bonds link Cys313–Cys343 and Cys331–Cys345. The segment at 313-361 is GPS; the sequence is CVSWDTKQDNEVNWKDDGCDTVKINEEQTECHCNHLTYFAILVQVEQKS. A stachel region spans residues 349–361; it reads TYFAILVQVEQKS. The helical transmembrane segment at 371 to 391 threads the bilayer; that stretch reads FITAVGCAVSLVSCLVLFYWL. Over 392 to 408 the chain is Cytoplasmic; that stretch reads CKRRRGKKNQISLVHRG. Residues 409–429 traverse the membrane as a helical segment; that stretch reads LVVAIFLLCLFFILTGILANV. Over 430–443 the chain is Extracellular; sequence ANETVCQLTGSLLH. The N-linked (GlcNAc...) asparagine glycan is linked to Asn431. The chain crosses the membrane as a helical span at residues 444-464; it reads YGLLSTLCWMAMEVFHTFLLV. The Cytoplasmic segment spans residues 465-471; it reads RKVFNSP. Residues 472-492 form a helical membrane-spanning segment; the sequence is LPIWIFYLMGFGFPFLLVSIL. Residues 493–530 are Extracellular-facing; sequence LSVGDIYGERKIKPSDDVNNPYRMCWMTEGDKSQLAHY. Residues 531-551 traverse the membrane as a helical segment; that stretch reads IINIGLLAVVVSSGLVMLFLV. The Cytoplasmic portion of the chain corresponds to 552-563; that stretch reads VREIRNRPDWKK. Residues 564–586 form a helical membrane-spanning segment; sequence IHVAFLSIWGLTCLYGTTWALGF. Topologically, residues 587-595 are extracellular; the sequence is LDFGPFSEV. A helical transmembrane segment spans residues 596–618; sequence TLFLFCIINSLQGFFLMLRYYAL. The Cytoplasmic portion of the chain corresponds to 619–648; that stretch reads ERMKKKDVSSSDGSSSGSSKQHMLQTNEKS.

Belongs to the G-protein coupled receptor 2 family. LN-TM7 subfamily. Heterodimer of 2 chains generated by proteolytic processing; the large extracellular N-terminal fragment (ADGRG1 NT) and the membrane-bound C-terminal fragment (ADGRG1-CT) predominantly remain associated and non-covalently linked. In terms of processing, autoproteolytically cleaved into 2 fragments; the large extracellular N-terminal fragment (ADGRG1 NT) and the membrane-bound C-terminal fragment (ADGRG1 CT) predominantly remain associated and non-covalently linked.

The protein localises to the cell membrane. Its activity is regulated as follows. Forms a heterodimer of 2 chains generated by proteolytic processing that remain associated through non-covalent interactions mediated by the GAIN-B domain. In the inactivated receptor, the Stachel sequence (also named stalk) is embedded in the GAIN-B domain, where it adopts a beta-strand conformation. On activation, the Stachel moves into the 7 transmembrane region and adopts a twisted hook-shaped configuration that forms contacts within the receptor, leading to coupling of a G-alpha protein, which activates signaling. The cleaved GAIN-B and N-terminal domains can then dissociate from the rest of the receptor. Adhesion G-protein coupled receptor (aGPCR), which is involved in oligodendrocyte development and maintenance of peripheral myelin. Ligand binding causes a conformation change that triggers signaling via guanine nucleotide-binding proteins (G proteins) and modulates the activity of downstream effectors, such as RhoA pathway. Adgrg1 is coupled to G(12) and/or G(13) G proteins (gna12 and gna13, respectively) and mediates the activation Rho small GTPases. Adgrg1-dependent RhoA signaling promotes timely radial sorting of axons. Required to establish proper myelin thickness and facilitate organization of the myelin sheath in the mature peripheral nervous system. The protein is Adhesion G-protein coupled receptor G1 of Danio rerio (Zebrafish).